We begin with the raw amino-acid sequence, 129 residues long: Small ribosomal subunit protein uS11 (129 aa).

This sequence belongs to the universal ribosomal protein uS11 family. Part of the 30S ribosomal subunit. Interacts with proteins S7 and S18. Binds to IF-3.

In terms of biological role, located on the platform of the 30S subunit, it bridges several disparate RNA helices of the 16S rRNA. Forms part of the Shine-Dalgarno cleft in the 70S ribosome. The sequence is that of Small ribosomal subunit protein uS11 from Pectobacterium atrosepticum (strain SCRI 1043 / ATCC BAA-672) (Erwinia carotovora subsp. atroseptica).